A 373-amino-acid polypeptide reads, in one-letter code: C-C chemokine receptor type 2 (373 aa).

Over 1–55 the chain is Extracellular; the sequence is MEDNNMLPQFIHGILSTSHSLFTRSIQELDEGATTPYDYDDGEPCHKTSVKQIGA. The chain crosses the membrane as a helical span at residues 56 to 83; the sequence is WILPPLYSLVFIFGFVGNMLVIIILIGC. Topologically, residues 84–93 are cytoplasmic; the sequence is KKLKSMTDIY. Residues 94 to 114 traverse the membrane as a helical segment; sequence LLNLAISDLLFLLTLPFWAHY. Residues 115-127 are Extracellular-facing; sequence AANEWVFGNIMCK. The cysteines at positions 126 and 203 are disulfide-linked. A helical membrane pass occupies residues 128–149; sequence VFTGLYHIGYFGGIFFIILLTI. The Cytoplasmic segment spans residues 150–166; it reads DRYLAIVHAVFALKART. The residue at position 152 (Tyr-152) is a Phosphotyrosine; by JAK2. The chain crosses the membrane as a helical span at residues 167–191; sequence VTFGVITSVVTWVVAVFASLPGIIF. At 192 to 219 the chain is on the extracellular side; it reads TKSKQDDHHYTCGPYFTQLWKNFQTIMR. The chain crosses the membrane as a helical span at residues 220 to 239; the sequence is NILSLILPLLVMVICYSGIL. Residues 240-256 lie on the Cytoplasmic side of the membrane; the sequence is HTLFRCRNEKKRHRAVR. Residues 257–281 form a helical membrane-spanning segment; it reads LIFAIMIVYFLFWTPYNIVLFLTTF. The Extracellular portion of the chain corresponds to 282–298; sequence QESLGMSNCVIDKHLDQ. Residues 299-322 form a helical membrane-spanning segment; it reads AMQVTETLGMTHCCINPVIYAFVG. Residues 323 to 373 lie on the Cytoplasmic side of the membrane; the sequence is EKFRRYLSIFFRKHIAKRLCKQCPVFYRETADRVSSTFTPSTGEQEVSVGL.

The protein belongs to the G-protein coupled receptor 1 family. In terms of assembly, interacts with ARRB1. Interacts (via extracellular N-terminal region) with beta-defensin DEFB106A/DEFB106B; this interaction may preferentially require specific tyrosine sulfation on CCR2. Interacts with NUP85; the interaction is required for CCR2 clusters formation on the cell membrane and CCR2 signaling. N-glycosylated. In terms of processing, sulfation increases the affinity for both monomeric and dimeric CCL2 with stronger binding to the monomeric form. Binding of sulfated CCR2 to CCL2 promotes conversion of CCL2 from dimer to monomer. As to expression, epressed in mature thymocytes. Detected in monocyte/macrophage cell lines, but not in nonhematopoietic cell lines.

The protein resides in the cell membrane. Its function is as follows. Key functional receptor for CCL2 but can also bind CCL7 and CCL12 chemokines. Its binding with CCL2 on monocytes and macrophages mediates chemotaxis and migration induction through the activation of the PI3K cascade, the small G protein Rac and lamellipodium protrusion. Also acts as a receptor for the beta-defensin DEFB106A/DEFB106B. Regulates the expression of T-cell inflammatory cytokines and T-cell differentiation, promoting the differentiation of T-cells into T-helper 17 cells (Th17) during inflammation. Facilitates the export of mature thymocytes by enhancing directional movement of thymocytes to sphingosine-1-phosphate stimulation and up-regulation of S1P1R expression; signals through the JAK-STAT pathway to regulate FOXO1 activity leading to an increased expression of S1P1R. Plays an important role in mediating peripheral nerve injury-induced neuropathic pain. Increases NMDA-mediated synaptic transmission in both dopamine D1 and D2 receptor-containing neurons, which may be caused by MAPK/ERK-dependent phosphorylation of GRIN2B/NMDAR2B. Mediates the recruitment of macrophages and monocytes to the injury site following brain injury. The protein is C-C chemokine receptor type 2 (Ccr2) of Mus musculus (Mouse).